Here is a 435-residue protein sequence, read N- to C-terminus: Glutamyl-tRNA reductase (435 aa).

Residues 49–52 (TCNR), S109, 114–116 (EGQ), and Q120 each bind substrate. Catalysis depends on C50, which acts as the Nucleophile. 198-203 (GAGRMS) lines the NADP(+) pocket.

This sequence belongs to the glutamyl-tRNA reductase family. Homodimer.

It carries out the reaction (S)-4-amino-5-oxopentanoate + tRNA(Glu) + NADP(+) = L-glutamyl-tRNA(Glu) + NADPH + H(+). It functions in the pathway porphyrin-containing compound metabolism; protoporphyrin-IX biosynthesis; 5-aminolevulinate from L-glutamyl-tRNA(Glu): step 1/2. The protein operates within porphyrin-containing compound metabolism; chlorophyll biosynthesis. Catalyzes the NADPH-dependent reduction of glutamyl-tRNA(Glu) to glutamate 1-semialdehyde (GSA). The chain is Glutamyl-tRNA reductase from Prochlorococcus marinus (strain MIT 9211).